The primary structure comprises 256 residues: Ribosomal RNA small subunit methyltransferase A (256 aa).

The S-adenosyl-L-methionine site is built by N12, L14, G39, E60, D85, and N103.

The protein belongs to the class I-like SAM-binding methyltransferase superfamily. rRNA adenine N(6)-methyltransferase family. RsmA subfamily.

Its subcellular location is the cytoplasm. The catalysed reaction is adenosine(1518)/adenosine(1519) in 16S rRNA + 4 S-adenosyl-L-methionine = N(6)-dimethyladenosine(1518)/N(6)-dimethyladenosine(1519) in 16S rRNA + 4 S-adenosyl-L-homocysteine + 4 H(+). Specifically dimethylates two adjacent adenosines (A1518 and A1519) in the loop of a conserved hairpin near the 3'-end of 16S rRNA in the 30S particle. May play a critical role in biogenesis of 30S subunits. The chain is Ribosomal RNA small subunit methyltransferase A from Legionella pneumophila (strain Corby).